We begin with the raw amino-acid sequence, 333 residues long: 4-hydroxyproline 2-epimerase (333 aa).

C91 (proton acceptor) is an active-site residue. Substrate-binding positions include 92 to 93 (GH), H225, and D250. C254 acts as the Proton donor in catalysis. 255–256 (GT) lines the substrate pocket.

Belongs to the proline racemase family.

It catalyses the reaction trans-4-hydroxy-L-proline = cis-4-hydroxy-D-proline. Catalyzes the epimerization of trans-4-hydroxy-L-proline (t4LHyp) to cis-4-hydroxy-D-proline (c4DHyp). Is likely involved in a degradation pathway that converts t4LHyp to alpha-ketoglutarate. Displays no proline racemase activity. The protein is 4-hydroxyproline 2-epimerase of Streptosporangium roseum (strain ATCC 12428 / DSM 43021 / JCM 3005 / KCTC 9067 / NCIMB 10171 / NRRL 2505 / NI 9100).